Reading from the N-terminus, the 413-residue chain is Multifunctional CCA protein (413 aa).

ATP contacts are provided by G8 and R11. The CTP site is built by G8 and R11. Mg(2+)-binding residues include D21 and D23. Residues R91, R137, and R140 each contribute to the ATP site. Residues R91, R137, and R140 each coordinate CTP. One can recognise an HD domain in the interval 225 to 326; it reads TGVHVMMVID…ANLLQGVDAY (102 aa).

It belongs to the tRNA nucleotidyltransferase/poly(A) polymerase family. Bacterial CCA-adding enzyme type 1 subfamily. As to quaternary structure, monomer. Can also form homodimers and oligomers. The cofactor is Mg(2+). It depends on Ni(2+) as a cofactor.

It carries out the reaction a tRNA precursor + 2 CTP + ATP = a tRNA with a 3' CCA end + 3 diphosphate. The catalysed reaction is a tRNA with a 3' CCA end + 2 CTP + ATP = a tRNA with a 3' CCACCA end + 3 diphosphate. Its function is as follows. Catalyzes the addition and repair of the essential 3'-terminal CCA sequence in tRNAs without using a nucleic acid template. Adds these three nucleotides in the order of C, C, and A to the tRNA nucleotide-73, using CTP and ATP as substrates and producing inorganic pyrophosphate. tRNA 3'-terminal CCA addition is required both for tRNA processing and repair. Also involved in tRNA surveillance by mediating tandem CCA addition to generate a CCACCA at the 3' terminus of unstable tRNAs. While stable tRNAs receive only 3'-terminal CCA, unstable tRNAs are marked with CCACCA and rapidly degraded. The protein is Multifunctional CCA protein of Nitrosospira multiformis (strain ATCC 25196 / NCIMB 11849 / C 71).